The following is a 404-amino-acid chain: Cysteine desulfurase IscS (404 aa).

Pyridoxal 5'-phosphate-binding positions include 75-76, asparagine 155, glutamine 183, and 203-205; these read AT and SGH. The residue at position 206 (lysine 206) is an N6-(pyridoxal phosphate)lysine. Threonine 243 provides a ligand contact to pyridoxal 5'-phosphate. The active-site Cysteine persulfide intermediate is the cysteine 328. Cysteine 328 serves as a coordination point for [2Fe-2S] cluster.

The protein belongs to the class-V pyridoxal-phosphate-dependent aminotransferase family. NifS/IscS subfamily. Homodimer. Forms a heterotetramer with IscU, interacts with other sulfur acceptors. Requires pyridoxal 5'-phosphate as cofactor.

The protein resides in the cytoplasm. It carries out the reaction (sulfur carrier)-H + L-cysteine = (sulfur carrier)-SH + L-alanine. The protein operates within cofactor biosynthesis; iron-sulfur cluster biosynthesis. Functionally, master enzyme that delivers sulfur to a number of partners involved in Fe-S cluster assembly, tRNA modification or cofactor biosynthesis. Catalyzes the removal of elemental sulfur atoms from cysteine to produce alanine. Functions as a sulfur delivery protein for Fe-S cluster synthesis onto IscU, an Fe-S scaffold assembly protein, as well as other S acceptor proteins. The sequence is that of Cysteine desulfurase IscS from Shewanella sp. (strain MR-4).